The sequence spans 254 residues: L-rhamnose 1-dehydrogenase (NAD(P)(+)) (254 aa).

Residues Gly13, Ser15, Ile18, Asp64, Val65, and Asn91 each coordinate NADP(+). Catalysis depends on Ser144, which acts as the Proton donor. Residues Ser144, Ser146, Gln154, and Tyr157 each contribute to the beta-L-rhamnose site. Residues Tyr157 and Lys161 each contribute to the NADP(+) site. The active-site Proton acceptor is Tyr157. The Lowers pKa of active site Tyr role is filled by Lys161. Thr189 is a binding site for beta-L-rhamnose. Residue Ile190 participates in NADP(+) binding. Asn195 provides a ligand contact to beta-L-rhamnose.

The protein belongs to the short-chain dehydrogenases/reductases (SDR) family.

The enzyme catalyses L-rhamnofuranose + NAD(+) = L-rhamnono-1,4-lactone + NADH + H(+). It carries out the reaction L-rhamnofuranose + NADP(+) = L-rhamnono-1,4-lactone + NADPH + H(+). The protein operates within carbohydrate degradation; L-rhamnose degradation. Functionally, NAD(P)-dependent dehydrogenase that catalyzes the oxidation of L-rhamnose to L-rhamnono-1,4-lactone. Also shows high activity with L-lyxose and low activity with L-mannose. Can utilize either NAD(+) or NADP(+), with a slight preference for NADP(+). Catalyzes the first step in an alternative pathway for rhamnose utilization that does not involve phosphorylated intermediates. In Sphingomonas sp. (strain SKA58), this protein is L-rhamnose 1-dehydrogenase (NAD(P)(+)).